A 132-amino-acid chain; its full sequence is Interleukin-5 (132 aa).

Residues 1–17 (MRLPLQLSILTLAWVWA) form the signal peptide. Asn45, Asn74, and Asn88 each carry an N-linked (GlcNAc...) asparagine glycan.

This sequence belongs to the IL-5 family. Homodimer; disulfide-linked. Interacts with IL5RA. Interacts with CSF2RB.

It localises to the secreted. In terms of biological role, homodimeric cytokine expressed predominantly by T-lymphocytes and NK cells that plays an important role in the survival, differentiation, and chemotaxis of eosinophils. Also acts on activated and resting B-cells to induce immunoglobulin production, growth, and differentiation. Mechanistically, exerts its biological effects through a receptor composed of IL5RA subunit and the cytokine receptor common subunit beta/CSF2RB. Binding to the receptor leads to activation of various kinases including LYN, SYK and JAK2 and thereby propagates signals through the RAS-MAPK and JAK-STAT5 pathways respectively. The sequence is that of Interleukin-5 (IL5) from Meriones unguiculatus (Mongolian jird).